We begin with the raw amino-acid sequence, 472 residues long: Chitobiosyldiphosphodolichol beta-mannosyltransferase (472 aa).

The Lumenal portion of the chain corresponds to 1–20 (MEEFQFIKYKGFDHVFKYSG). A helical membrane pass occupies residues 21–41 (PWLWWLVGFYLCLPILAYTLL). The Cytoplasmic portion of the chain corresponds to 42 to 118 (PYLTMNGTIS…PITVTKNTSN (77 aa)). Residues 119 to 139 (LPFILFAAKKMVVQFFQLLKL) constitute an intramembrane region (helical). Residues 140–472 (LSDFRGTDYV…MGKRFEYSTD (333 aa)) are Cytoplasmic-facing.

It belongs to the glycosyltransferase group 1 family.

It is found in the endoplasmic reticulum membrane. The catalysed reaction is an N,N'-diacetylchitobiosyl-diphospho-di-trans,poly-cis-dolichol + GDP-alpha-D-mannose = a beta-D-Man-(1-&gt;4)-beta-D-GlcNAc-(1-&gt;4)-alpha-D-GlcNAc-diphospho-di-trans,poly-cis-dolichol + GDP + H(+). Its pathway is protein modification; protein glycosylation. Functionally, participates in the formation of the lipid-linked precursor oligosaccharide for N-glycosylation. Involved in assembling the dolichol-pyrophosphate-GlcNAc(2)-Man(5) intermediate on the cytoplasmic surface of the ER. This Debaryomyces hansenii (strain ATCC 36239 / CBS 767 / BCRC 21394 / JCM 1990 / NBRC 0083 / IGC 2968) (Yeast) protein is Chitobiosyldiphosphodolichol beta-mannosyltransferase (ALG1).